Here is a 435-residue protein sequence, read N- to C-terminus: UPF0597 protein AHA_4077 (435 aa).

The protein belongs to the UPF0597 family.

The sequence is that of UPF0597 protein AHA_4077 from Aeromonas hydrophila subsp. hydrophila (strain ATCC 7966 / DSM 30187 / BCRC 13018 / CCUG 14551 / JCM 1027 / KCTC 2358 / NCIMB 9240 / NCTC 8049).